The chain runs to 1018 residues: D-2-hydroxyglutarate dehydrogenase (1018 aa).

The 234-residue stretch at 48-281 (YQLLPDAVVF…TEARLDITRL (234 aa)) folds into the FAD-binding PCMH-type domain. (R)-2-hydroxyglutarate-binding residues include R402 and H500. Residues 662–695 (FSHEVKEAMSGCLACKACSTQCPIKIDVPEFRSR) enclose the 4Fe-4S ferredoxin-type domain. Residues C673, C676, C679, and C683 each contribute to the [4Fe-4S] cluster site.

It in the N-terminal section; belongs to the FAD-binding oxidoreductase/transferase type 4 family. As to quaternary structure, homotetramer. [4Fe-4S] cluster serves as cofactor. It depends on FAD as a cofactor.

It carries out the reaction (R)-2-hydroxyglutarate + A = 2-oxoglutarate + AH2. Activity is completely inhibited by the addition of 0.5 mM Mn(2+), Ni(2+), or Co(2+) and partially inhibited by 0.5 mM Zn(2+). In terms of biological role, catalyzes the oxidation of D-2-hydroxyglutarate (D-2-HGA) to 2-oxoglutarate. Appears to be the only D2HGDH in E.coli, providing the way to recycle D-2-HGA produced during L-serine synthesis by SerA, by converting it back to 2-oxoglutarate. The physiological molecule that functions as the primary electron acceptor during D-2-HGA oxidation by YdiJ in E.coli is unknown. Shows strict substrate specificity towards D-2-HGA, since it has no detectable activity on L-2-hydroxyglutarate, L-malate, D-malate, L-lactate, D-lactate, L-tartrate, D-tartrate, L-glycerate, D-glycerate, glutarate, or pyruvate. In Escherichia coli (strain K12), this protein is D-2-hydroxyglutarate dehydrogenase (ydiJ).